Reading from the N-terminus, the 222-residue chain is THAP domain-containing protein 6 (222 aa).

The THAP-type zinc finger occupies 1 to 89 (MVKCCSAIGC…LKPGVIPSIF (89 aa)). Residues 139–142 (EHSY) carry the HCFC1-binding motif (HBM) motif. A coiled-coil region spans residues 149-194 (KKLKHKLDHVIGELEDTKESLRNVLDREKRFQKSLRKTIRELKDEC).

This chain is THAP domain-containing protein 6 (THAP6), found in Homo sapiens (Human).